We begin with the raw amino-acid sequence, 558 residues long: Dihydroxy-acid dehydratase (558 aa).

C49 lines the [2Fe-2S] cluster pocket. D81 is a Mg(2+) binding site. C122 provides a ligand contact to [2Fe-2S] cluster. Mg(2+) contacts are provided by D123 and K124. K124 bears the N6-carboxylysine mark. Residue C194 participates in [2Fe-2S] cluster binding. E446 is a Mg(2+) binding site. S472 functions as the Proton acceptor in the catalytic mechanism.

The protein belongs to the IlvD/Edd family. In terms of assembly, homodimer. Requires [2Fe-2S] cluster as cofactor. It depends on Mg(2+) as a cofactor.

The catalysed reaction is (2R)-2,3-dihydroxy-3-methylbutanoate = 3-methyl-2-oxobutanoate + H2O. It carries out the reaction (2R,3R)-2,3-dihydroxy-3-methylpentanoate = (S)-3-methyl-2-oxopentanoate + H2O. The protein operates within amino-acid biosynthesis; L-isoleucine biosynthesis; L-isoleucine from 2-oxobutanoate: step 3/4. It participates in amino-acid biosynthesis; L-valine biosynthesis; L-valine from pyruvate: step 3/4. Its function is as follows. Functions in the biosynthesis of branched-chain amino acids. Catalyzes the dehydration of (2R,3R)-2,3-dihydroxy-3-methylpentanoate (2,3-dihydroxy-3-methylvalerate) into 2-oxo-3-methylpentanoate (2-oxo-3-methylvalerate) and of (2R)-2,3-dihydroxy-3-methylbutanoate (2,3-dihydroxyisovalerate) into 2-oxo-3-methylbutanoate (2-oxoisovalerate), the penultimate precursor to L-isoleucine and L-valine, respectively. This chain is Dihydroxy-acid dehydratase, found in Synechococcus sp. (strain RCC307).